The following is a 183-amino-acid chain: Oligoribonuclease (183 aa).

Positions 10-173 (LIWIDLEMTG…ADIRESIAEL (164 aa)) constitute an Exonuclease domain. The active site involves tyrosine 131.

This sequence belongs to the oligoribonuclease family.

It is found in the cytoplasm. In terms of biological role, 3'-to-5' exoribonuclease specific for small oligoribonucleotides. In Idiomarina loihiensis (strain ATCC BAA-735 / DSM 15497 / L2-TR), this protein is Oligoribonuclease.